Reading from the N-terminus, the 510-residue chain is Aromatic-L-amino-acid decarboxylase (510 aa).

The segment covering 1–17 (MSHIPISNTIPTKQTDG) has biased composition (polar residues). The tract at residues 1 to 28 (MSHIPISNTIPTKQTDGNGKANISPDKL) is disordered. Threonine 117 provides a ligand contact to substrate. Pyridoxal 5'-phosphate is bound by residues alanine 183, serine 184, histidine 227, aspartate 305, and asparagine 334. Histidine 227 contacts substrate. Histidine 227 is a catalytic residue. Residue lysine 337 is modified to N6-(pyridoxal phosphate)lysine. The disordered stretch occupies residues 358–384 (NAFNVDPLYLKHDMQGSAPDYRHWQIP).

This sequence belongs to the group II decarboxylase family. As to quaternary structure, homodimer. It depends on pyridoxal 5'-phosphate as a cofactor. As to expression, hypoderm isoform is expressed only in hypodermal epithelium and the CNS isoform only in central nervous system. Expressed in the adult head (at protein level).

The enzyme catalyses L-dopa + H(+) = dopamine + CO2. It carries out the reaction 5-hydroxy-L-tryptophan + H(+) = serotonin + CO2. Its function is as follows. Catalyzes the decarboxylation of L-3,4-dihydroxyphenylalanine (L-DOPA) to dopamine and L-5-hydroxytryptophan (5-HTP) to serotonin. Catalyzes the formation of serotonin more efficiently than dopamine. Displays no activity to tyrosine. Variation in the synthesis of bioamines may be a factor contributing to natural variation in life span. In Drosophila melanogaster (Fruit fly), this protein is Aromatic-L-amino-acid decarboxylase (Ddc).